The following is a 1087-amino-acid chain: Exportin-7 (1087 aa).

Residues 30–96 (AEKALVEFTN…RNYVLNYLAT (67 aa)) enclose the Importin N-terminal domain.

This sequence belongs to the exportin family.

It is found in the cytoplasm. It localises to the nucleus. Mediates the nuclear export of proteins (cargos) with broad substrate specificity. The protein is Exportin-7 (XPO7) of Gallus gallus (Chicken).